A 193-amino-acid polypeptide reads, in one-letter code: Bifunctional protein PyrR (193 aa).

Residues 48–49 (TR), Arg-89, Arg-93, 110–118 (DDVLFSGRT), Arg-143, and Val-167 each bind substrate. Residues 106–118 (VVLVDDVLFSGRT) carry the PRPP-binding motif.

It belongs to the purine/pyrimidine phosphoribosyltransferase family. PyrR subfamily.

It catalyses the reaction UMP + diphosphate = 5-phospho-alpha-D-ribose 1-diphosphate + uracil. Its function is as follows. Regulates the transcription of the pyrimidine nucleotide (pyr) operon in response to exogenous pyrimidines. In terms of biological role, also displays a weak uracil phosphoribosyltransferase activity which is not physiologically significant. The protein is Bifunctional protein PyrR of Streptomyces coelicolor (strain ATCC BAA-471 / A3(2) / M145).